A 156-amino-acid chain; its full sequence is Acyl carrier protein, mitochondrial (156 aa).

The transit peptide at 1 to 68 directs the protein to the mitochondrion; sequence MASRVLCACV…GTVTHLCRQY (68 aa). The Carrier domain occupies 77–152; the sequence is DGIKDRVLYV…EIVDYIADKK (76 aa). The residue at position 88 (K88) is an N6-acetyllysine. S112 bears the O-(pantetheine 4'-phosphoryl)serine mark.

This sequence belongs to the acyl carrier protein (ACP) family. Mammalian complex I is composed of 45 different subunits. Interacts with ETFRF1. Identified in a complex composed of MALSU1, MIEF1 upstream open reading frame protein and NDUFAB1; within the trimeric complex, MIEF1 upstream open reading frame protein functions as a bridging scaffold that interacts with MALSU1 on one side, and with NDUFAB1 on the other side. The complex interacts with the mitochondrial large ribosomal subunit. Interacts with alpha-1-microglobulin chain; this interaction is required for the maintenance of mitochondrial redox homeostasis. Component of the mitochondrial core iron-sulfur cluster (ISC) complex composed of NFS1, LYRM4, NDUFAB1, ISCU, FXN, and FDX2; this complex is a heterohexamer containing two copies of each monomer. Component of the cyteine desulfurase complex composed of NFS1, LYRM4 and NDUFAB1; this complex contributes to the stability and cysteine desulfurase activity of NFS1. In terms of processing, phosphopantetheinylation at Ser-112 is essential for interactions with LYR motif-containing proteins.

The protein resides in the mitochondrion. Functionally, carrier of the growing fatty acid chain in fatty acid biosynthesis. Accessory and non-catalytic subunit of the mitochondrial membrane respiratory chain NADH dehydrogenase (Complex I), which functions in the transfer of electrons from NADH to the respiratory chain. Accessory protein, of the core iron-sulfur cluster (ISC) assembly complex, that regulates, in association with LYRM4, the stability and the cysteine desulfurase activity of NFS1 and participates in the [2Fe-2S] clusters assembly on the scaffolding protein ISCU. The core iron-sulfur cluster (ISC) assembly complex is involved in the de novo synthesis of a [2Fe-2S] cluster, the first step of the mitochondrial iron-sulfur protein biogenesis. This process is initiated by the cysteine desulfurase complex (NFS1:LYRM4:NDUFAB1) that produces persulfide which is delivered on the scaffold protein ISCU in a FXN-dependent manner. Then this complex is stabilized by FDX2 which provides reducing equivalents to accomplish the [2Fe-2S] cluster assembly. Finally, the [2Fe-2S] cluster is transferred from ISCU to chaperone proteins, including HSCB, HSPA9 and GLRX5. This Mus musculus (Mouse) protein is Acyl carrier protein, mitochondrial.